The following is a 150-amino-acid chain: Large ribosomal subunit protein bL9 (150 aa).

It belongs to the bacterial ribosomal protein bL9 family.

Functionally, binds to the 23S rRNA. The protein is Large ribosomal subunit protein bL9 of Burkholderia cenocepacia (strain HI2424).